We begin with the raw amino-acid sequence, 430 residues long: Tol-Pal system protein TolB (430 aa).

A signal peptide spans 1 to 21; sequence MKQAFRVALGFLILWASVLHA.

This sequence belongs to the TolB family. In terms of assembly, the Tol-Pal system is composed of five core proteins: the inner membrane proteins TolA, TolQ and TolR, the periplasmic protein TolB and the outer membrane protein Pal. They form a network linking the inner and outer membranes and the peptidoglycan layer.

It is found in the periplasm. Functionally, part of the Tol-Pal system, which plays a role in outer membrane invagination during cell division and is important for maintaining outer membrane integrity. TolB occupies a key intermediary position in the Tol-Pal system because it communicates directly with both membrane-embedded components, Pal in the outer membrane and TolA in the inner membrane. The chain is Tol-Pal system protein TolB from Serratia proteamaculans (strain 568).